The sequence spans 289 residues: Cell division protein ZipA (289 aa).

A topological domain (periplasmic) is located at residue M1. The chain crosses the membrane as a helical span at residues 2–22; sequence EIGLREWLIVIGIIVIAGILF. Topologically, residues 23-289 are cytoplasmic; the sequence is DGWRRMRGSK…ERRALTQRRG (267 aa). The tract at residues 48–141 is disordered; sequence DEEETTSAEV…KPAQRITEDK (94 aa). 3 stretches are compositionally biased toward basic and acidic residues: residues 64–77, 85–106, and 123–141; these read LDTHKEPQLDEHDL, REGKRSNSDKRGNSDKKRKDEP, and GRDDDFPDDKPAQRITEDK.

It belongs to the ZipA family. As to quaternary structure, interacts with FtsZ via their C-terminal domains.

The protein localises to the cell inner membrane. Functionally, essential cell division protein that stabilizes the FtsZ protofilaments by cross-linking them and that serves as a cytoplasmic membrane anchor for the Z ring. Also required for the recruitment to the septal ring of downstream cell division proteins. This is Cell division protein ZipA from Pseudomonas savastanoi pv. phaseolicola (strain 1448A / Race 6) (Pseudomonas syringae pv. phaseolicola (strain 1448A / Race 6)).